We begin with the raw amino-acid sequence, 739 residues long: Protein NPGR2 (739 aa).

Residues 32–71 form a disordered region; sequence EQMRHREEEDKKSEVGVGRDYNGSSALSTAESENAKKLDN. Positions 33 to 45 are enriched in basic and acidic residues; that stretch reads QMRHREEEDKKSE. Polar residues predominate over residues 53–63; sequence NGSSALSTAES. 9 TPR repeats span residues 90-127, 162-195, 215-248, 465-498, 500-533, 536-569, 592-625, 626-659, and 697-733; these read EEAR…KMKT, FEAI…VETS, TKAV…HWKL, PRVV…GAES, LEVW…TGKW, GKLL…LQVQ, LGTW…APYS, SVRY…DPMH, and HSAW…EETM.

Interacts with calmodulin in a calcium-dependent manner. In terms of tissue distribution, expressed in pollen, flowers and fruits.

The chain is Protein NPGR2 from Arabidopsis thaliana (Mouse-ear cress).